The sequence spans 182 residues: Small ribosomal subunit protein uS4c (182 aa).

The tract at residues 13-32 (GLTSKRPRSGSDLKNPLRSG) is disordered. Positions 82-143 (MRLDNILFRL…KQRSKALIQN (62 aa)) constitute an S4 RNA-binding domain.

It belongs to the universal ribosomal protein uS4 family. Part of the 30S ribosomal subunit. Contacts protein S5. The interaction surface between S4 and S5 is involved in control of translational fidelity.

It localises to the plastid. It is found in the chloroplast. Its function is as follows. One of the primary rRNA binding proteins, it binds directly to 16S rRNA where it nucleates assembly of the body of the 30S subunit. With S5 and S12 plays an important role in translational accuracy. The chain is Small ribosomal subunit protein uS4c (rps4) from Scadoxus puniceus (Paintbrush lily).